A 582-amino-acid chain; its full sequence is WD repeat-containing protein JIP5 (582 aa).

5 WD repeats span residues 27-68 (KYPE…EAQS), 125-168 (RHKG…VLSK), 177-216 (DKND…SNQL), 265-310 (DQED…LMDQ), and 373-410 (GPAD…LNSD). 2 disordered regions span residues 405–496 (ETLN…DTEL) and 531–582 (TKEQ…FDDL). Composition is skewed to acidic residues over residues 410-438 (DSDD…DDDV) and 447-485 (EVND…ENVT). 2 stretches are compositionally biased toward basic and acidic residues: residues 531–540 (TKEQSTKKAD) and 570–582 (QKHE…FDDL).

This sequence belongs to the WD repeat WDR55 family.

Its subcellular location is the nucleus. It localises to the nucleolus. The chain is WD repeat-containing protein JIP5 (JIP5) from Debaryomyces hansenii (strain ATCC 36239 / CBS 767 / BCRC 21394 / JCM 1990 / NBRC 0083 / IGC 2968) (Yeast).